Here is a 706-residue protein sequence, read N- to C-terminus: Catalase HPII (706 aa).

Active-site residues include H77 and N151. Residue Y365 participates in heme binding. Residues 512–532 form a disordered region; sequence EPPEEQVDESAPVSPALSQVT.

Belongs to the catalase family. HPII subfamily. Heme serves as cofactor.

The protein resides in the cytoplasm. The catalysed reaction is 2 H2O2 = O2 + 2 H2O. Decomposes hydrogen peroxide into water and oxygen; serves to protect cells from the toxic effects of hydrogen peroxide. The sequence is that of Catalase HPII (katE) from Mycobacterium avium.